Reading from the N-terminus, the 70-residue chain is Prokaryotic ubiquitin-like protein UBact (70 aa).

Composition is skewed to basic and acidic residues over residues 1 to 15 (MPDQ…RKQG) and 24 to 50 (TRHD…RDPG). Residues 1–70 (MPDQRQQERS…RQQRREQSGE (70 aa)) are disordered. Glu70 participates in a covalent cross-link: Isoglutamyl lysine isopeptide (Glu-Lys) (interchain with K-? in acceptor proteins).

The protein belongs to the ubiquitin-like protein UBact family.

Functionally, may function as a protein modifier covalently attached to lysine residues of substrate proteins. This may serve to target the modified proteins for degradation by proteasomes. This chain is Prokaryotic ubiquitin-like protein UBact, found in Terrybacteria sp. (strain RIFCSPHIGHO2_01_FULL_58_15).